The following is a 454-amino-acid chain: MKQNSLNVKEKKLSKVAFSHVGCEKNLVDTEHMQGLLDKEGYEVDSNINEANVVVVNTCSFIQTAREESIRKILEYTNQGKEVIVAGCMAQHFKDELIKEIPEIKGLIGTGDYQKIAKVLDRVEKGEIVNEVSKIPEFIADEEIPRFVDKNKFVAYLRIAEGCNYNCAFCIIPKLRGPQRSRTIESIVSEAKSLAKQGIQEIILISQITTNYGQDIYGKPSLAKLLNELSKVPIPWIRIHYAYPTGLTDQVIRAFKDSKNIVPYFDLPLQHSHPDVLKSMNRPWQASLNESILEKIREEIPSAVLRTSLIVGFPGEKKEHFEHLLEFLDRHKFDHVGVFIFSPEVGTAAFDLPNKVSPEVAEARKDNVISVQQNISKDKNQSYVGSKMKILVEKISDNNELIGRSYNFAPEIDGTVILSVKDKIDLKNYSGKFVEANISFADEYDLYGETLKIL.

The MTTase N-terminal domain occupies 14-125 (SKVAFSHVGC…IAKVLDRVEK (112 aa)). The [4Fe-4S] cluster site is built by C23, C59, C88, C163, C167, and C170. A Radical SAM core domain is found at 149–378 (DKNKFVAYLR…ISVQQNISKD (230 aa)). Residues 381 to 452 (QSYVGSKMKI…EYDLYGETLK (72 aa)) form the TRAM domain.

This sequence belongs to the methylthiotransferase family. RimO subfamily. [4Fe-4S] cluster is required as a cofactor.

The protein resides in the cytoplasm. It carries out the reaction L-aspartate(89)-[ribosomal protein uS12]-hydrogen + (sulfur carrier)-SH + AH2 + 2 S-adenosyl-L-methionine = 3-methylsulfanyl-L-aspartate(89)-[ribosomal protein uS12]-hydrogen + (sulfur carrier)-H + 5'-deoxyadenosine + L-methionine + A + S-adenosyl-L-homocysteine + 2 H(+). Functionally, catalyzes the methylthiolation of an aspartic acid residue of ribosomal protein uS12. In Prochlorococcus marinus (strain MIT 9215), this protein is Ribosomal protein uS12 methylthiotransferase RimO.